Consider the following 1300-residue polypeptide: Serine protease EspP (1300 aa).

Positions 1 to 55 (MNKIYSLKYSHITGGLIAVSELSGRVSSRATGKKKHKRILALCFLGLLQSSYSFA) are cleaved as a signal peptide. One can recognise a Peptidase S6 domain in the interval 57-311 (QMDISNFYIR…NQTTIDNLKN (255 aa)). Catalysis depends on charge relay system residues histidine 127, aspartate 156, and serine 263. The Autotransporter domain occupies 1034–1300 (DINGEAGAWA…AVNANFRYSF (267 aa)).

Cleaved to release the mature protein from the outer membrane.

Its subcellular location is the periplasm. It localises to the secreted. The protein resides in the cell surface. It is found in the cell outer membrane. Inhibition of cytotoxic activity by phenylmethylsulfonyl fluoride. In terms of biological role, serine protease capable of cleaving pepsin A and human coagulation factor V, which may contribute to the mucosal hemorrhage observed in hemorrhagic colitis. The polypeptide is Serine protease EspP (espP) (Escherichia coli O157:H7).